The primary structure comprises 428 residues: Serine--tRNA ligase (428 aa).

231 to 233 (TSE) is an L-serine binding site. ATP is bound by residues 262-264 (RRE) and valine 278. Glutamate 285 lines the L-serine pocket. 349–352 (ELTS) is an ATP binding site. Residue threonine 384 participates in L-serine binding.

Belongs to the class-II aminoacyl-tRNA synthetase family. Type-1 seryl-tRNA synthetase subfamily. Homodimer. The tRNA molecule binds across the dimer.

Its subcellular location is the cytoplasm. It carries out the reaction tRNA(Ser) + L-serine + ATP = L-seryl-tRNA(Ser) + AMP + diphosphate + H(+). The enzyme catalyses tRNA(Sec) + L-serine + ATP = L-seryl-tRNA(Sec) + AMP + diphosphate + H(+). It participates in aminoacyl-tRNA biosynthesis; selenocysteinyl-tRNA(Sec) biosynthesis; L-seryl-tRNA(Sec) from L-serine and tRNA(Sec): step 1/1. Its function is as follows. Catalyzes the attachment of serine to tRNA(Ser). Is also able to aminoacylate tRNA(Sec) with serine, to form the misacylated tRNA L-seryl-tRNA(Sec), which will be further converted into selenocysteinyl-tRNA(Sec). In Bifidobacterium adolescentis (strain ATCC 15703 / DSM 20083 / NCTC 11814 / E194a), this protein is Serine--tRNA ligase.